We begin with the raw amino-acid sequence, 228 residues long: Glycosylphosphatidylinositol-anchored high density lipoprotein-binding protein 1 (228 aa).

Residues 1-22 form the signal peptide; that stretch reads MKALRAVLLILLLSGQPGSGWA. Residues 21 to 32 form a disordered region; that stretch reads WAQEDGDADPEP. Residues 24–48 are important for LPL transport to the lumenal surface of endothelial cells; that stretch reads EDGDADPEPENYNYDDDDDEEEEEE. The span at 24–49 shows a compositional bias: acidic residues; sequence EDGDADPEPENYNYDDDDDEEEEEET. Tyr35 is modified (sulfotyrosine). The UPAR/Ly6 domain occupies 61-148; it reads LQCYFCQVLH…PWQNPQVQNP (88 aa). 5 disulfides stabilise this stretch: Cys63/Cys88, Cys66/Cys75, Cys81/Cys109, Cys113/Cys129, and Cys130/Cys135. Asn76 carries an N-linked (GlcNAc...) asparagine glycan. The interval 102-108 is important for interaction with LPL; sequence LTTYSMW. A disordered region spans residues 145–200; the sequence is VQNPLGGRADSPLESGTRHPQGGKFSHPQVVKAAHPQSDGANLPKSGKANQPQGSG. The GPI-anchor amidated glycine moiety is linked to residue Gly198. The propeptide at 199-228 is removed in mature form; the sequence is SGAGYPSGWTKFGNIALLLSFFTCLWASGA.

As to quaternary structure, mostly monomer, but also homodimer and homooligomer. Interacts with lipoprotein lipase (LPL). Interacts with high affinity with high-density lipoprotein (HDL). Interacts with chylomicrons. Interacts with APOA5. In terms of processing, glycosylation of Asn-76 is critical for cell surface localization. Sulfation of a Tyr in the N-terminal acidic region increases the affinity for LPL. Detected in fat tissue. Detected on the luminal surface of capillary endothelial cells in heart, skeletal muscle and brown adipose tissue (at protein level). Detected in heart and brown adipose tissue. Expressed at lower levels in lung and liver.

It localises to the apical cell membrane. The protein resides in the basolateral cell membrane. It is found in the cell membrane. Mediates the transport of lipoprotein lipase LPL from the basolateral to the apical surface of endothelial cells in capillaries. Anchors LPL on the surface of endothelial cells in the lumen of blood capillaries. Thereby, plays an important role in lipolytic processing of chylomicrons by LPL, triglyceride metabolism and lipid homeostasis. Binds chylomicrons and phospholipid particles that contain APOA5. Binds high-density lipoprotein (HDL) and plays a role in the uptake of lipids from HDL. This is Glycosylphosphatidylinositol-anchored high density lipoprotein-binding protein 1 from Mus musculus (Mouse).